Consider the following 367-residue polypeptide: MTKTIVVKIGTSSLTQAETGQLALSTIATLAETLCHLRSQGHRVILVSSGAVGVGCARLGLTERPRAIALKQAVAAVGQGRLIRIYDDLFTTLQQAIAQVLLTRSDLVQRSRYLNAYNTFQELLGLGVIPIVNENDTVAIDELKFGDNDTLSALVASLIEADWLFLLTDVDRLYSADPRSVPDARPIALVSSIKELAELQIGSQGSQWGTGGMVTKISAARIAIAAGVRTVITQGRFPQNIEKIIQGELIGTHFEPQPEPTSARKRWIAYGLLPAGKLYLDEGAIAAISLAGKSLLAAGIKLVEGEFDTQDAVQLCDSNGNEIARGLVNYNSNDLQKIRGCHSREISTILGYAGAETVIHRDNLVLI.

Lysine 8 lines the ATP pocket. Residues serine 49, aspartate 136, and asparagine 148 each coordinate substrate. ATP contacts are provided by residues 168–169 and 210–216; these read TD and TGGMVTK. The PUA domain maps to 275–353; it reads AGKLYLDEGA…REISTILGYA (79 aa).

This sequence belongs to the glutamate 5-kinase family.

It localises to the cytoplasm. The enzyme catalyses L-glutamate + ATP = L-glutamyl 5-phosphate + ADP. It participates in amino-acid biosynthesis; L-proline biosynthesis; L-glutamate 5-semialdehyde from L-glutamate: step 1/2. In terms of biological role, catalyzes the transfer of a phosphate group to glutamate to form L-glutamate 5-phosphate. In Nostoc punctiforme (strain ATCC 29133 / PCC 73102), this protein is Glutamate 5-kinase.